Consider the following 328-residue polypeptide: Olfactory receptor 4A16 (328 aa).

Residues 1 to 23 (MRPSSNVTEFVLLGLTQDPDVKK) are Extracellular-facing. Asn-6 is a glycosylation site (N-linked (GlcNAc...) asparagine). The helical transmembrane segment at 24 to 47 (TLFVMFLLIYIVTMVGNLLIWVTT) threads the bilayer. Residues 48–55 (IGSPSLGS) are Cytoplasmic-facing. Residues 56–77 (LMYFFLAYLSLMDAIYSTAMSP) traverse the membrane as a helical segment. Topologically, residues 78–98 (KLMIDLLCDKIAISLSACMGQ) are extracellular. The cysteines at positions 95 and 187 are disulfide-linked. The helical transmembrane segment at 99 to 118 (LFIEHLLGGAEVFLLVVMAY) threads the bilayer. The Cytoplasmic segment spans residues 119-137 (DRYVAISKPLHYLNIMNRL). Residues 138 to 156 (VCILLLVVAMIGGFVHSVV) traverse the membrane as a helical segment. The Extracellular portion of the chain corresponds to 157-193 (QIVFLYSLPICGPNVIDHSVCDMYPLLELLCLDTYFI). The helical transmembrane segment at 194–217 (GLTVVANGGIICMVIFTFLLISCG) threads the bilayer. Over 218-233 (VILNFLKTYSQEERHK) the chain is Cytoplasmic. Residues 234–256 (ALPTCISHIIVVALVFVPCIFMY) form a helical membrane-spanning segment. Residues 257 to 267 (VRPVSNFPFDK) are Extracellular-facing. Residues 268–287 (LMTVFYSIITLMLNPLIYSL) form a helical membrane-spanning segment. At 288–328 (RQSEMKNAMKNLWCEKLSIVRKRVSPTLNIFIPSSKATNRR) the chain is on the cytoplasmic side.

Belongs to the G-protein coupled receptor 1 family.

It is found in the cell membrane. In terms of biological role, odorant receptor. The protein is Olfactory receptor 4A16 (OR4A16) of Homo sapiens (Human).